The sequence spans 337 residues: ATP-dependent 6-phosphofructokinase (337 aa).

Position 11 (G11) interacts with ATP. 21-25 (RAVVR) serves as a coordination point for ADP. Residues 72-73 (RY) and 102-105 (GDGS) contribute to the ATP site. Position 103 (D103) interacts with Mg(2+). 125–127 (TID) is a binding site for substrate. The active-site Proton acceptor is D127. An ADP-binding site is contributed by R154. Substrate contacts are provided by residues R162 and 169-171 (MGR). ADP is bound by residues 185 to 187 (GAD), R212, and 214 to 216 (KNH). Substrate is bound by residues E223, R245, and 251 to 254 (HILR).

It belongs to the phosphofructokinase type A (PFKA) family. ATP-dependent PFK group I subfamily. Prokaryotic clade 'B1' sub-subfamily. In terms of assembly, homotetramer. Mg(2+) is required as a cofactor.

It is found in the cytoplasm. The catalysed reaction is beta-D-fructose 6-phosphate + ATP = beta-D-fructose 1,6-bisphosphate + ADP + H(+). Its pathway is carbohydrate degradation; glycolysis; D-glyceraldehyde 3-phosphate and glycerone phosphate from D-glucose: step 3/4. Its activity is regulated as follows. Allosterically activated by ADP and other diphosphonucleosides, and allosterically inhibited by phosphoenolpyruvate. In terms of biological role, catalyzes the phosphorylation of D-fructose 6-phosphate to fructose 1,6-bisphosphate by ATP, the first committing step of glycolysis. The polypeptide is ATP-dependent 6-phosphofructokinase (Streptococcus equi subsp. zooepidemicus (strain H70)).